The primary structure comprises 373 residues: MANTTGEPEEVSGALSLPSASAYVKLVLLGLIMCVSLAGNAILSLLVLKERALHKAPYYFLLDLCLADGIRSAICFPFVLASVRHGSSWTFSALSCKIVAFMAVLFCFHAAFMLFCISVTRYMAIAHHRFYAKRMTLWTCAAVICMAWTLSVAMAFPPVFDVGTYKFIREEDQCIFEHRYFKANDTLGFMLMLAVLMAATHAVYGKLLLFEYRHRKMKPVQMVPAISQNWTFHGPGATGQAAANWIAGFGRGPMPPTLLGIRQNGHAASRRLLGMDEVKGEKQLGRMFYAITLLFLLLWSPYIVACYWRVFVKACAVPHRYLATAVWMSFAQAAVNPIVCFLLNKDLKKCLRTHAPCWGTGGAPAPREPYCVM.

Residues 1-26 (MANTTGEPEEVSGALSLPSASAYVKL) lie on the Extracellular side of the membrane. Asparagine 3 carries an N-linked (GlcNAc...) asparagine glycan. The chain crosses the membrane as a helical span at residues 27–47 (VLLGLIMCVSLAGNAILSLLV). Residues 48–59 (LKERALHKAPYY) are Cytoplasmic-facing. The helical transmembrane segment at 60–80 (FLLDLCLADGIRSAICFPFVL) threads the bilayer. Residues 81 to 97 (ASVRHGSSWTFSALSCK) lie on the Extracellular side of the membrane. A disulfide bond links cysteine 96 and cysteine 174. Residues 98 to 118 (IVAFMAVLFCFHAAFMLFCIS) traverse the membrane as a helical segment. The Cytoplasmic segment spans residues 119 to 139 (VTRYMAIAHHRFYAKRMTLWT). A helical transmembrane segment spans residues 140-160 (CAAVICMAWTLSVAMAFPPVF). Residues 161-188 (DVGTYKFIREEDQCIFEHRYFKANDTLG) are Extracellular-facing. Asparagine 184 carries an N-linked (GlcNAc...) asparagine glycan. A helical membrane pass occupies residues 189-209 (FMLMLAVLMAATHAVYGKLLL). Residues 210-287 (FEYRHRKMKP…VKGEKQLGRM (78 aa)) lie on the Cytoplasmic side of the membrane. A helical membrane pass occupies residues 288 to 308 (FYAITLLFLLLWSPYIVACYW). Residues 309–322 (RVFVKACAVPHRYL) are Extracellular-facing. A helical membrane pass occupies residues 323-343 (ATAVWMSFAQAAVNPIVCFLL). Residues 344–373 (NKDLKKCLRTHAPCWGTGGAPAPREPYCVM) lie on the Cytoplasmic side of the membrane.

This sequence belongs to the G-protein coupled receptor 1 family. In terms of tissue distribution, expressed in the ovary, specifically in granulosa cells of follicles that have passed the primary stage and in oocytes (at protein level). Expressed in preadipocytes.

It localises to the cell membrane. In terms of biological role, is a receptor for the SMIM20 derived peptides Phoenixin-14 and Phoenixin-20. It mediates the Phoenixin-14 and Phoenixin-20 augmentation of gonadotropin-releasing hormone (GNRH) signaling in the hypothalamus and pituitary gland. In the ovary, it mediates the effects of Phoenixin-14 and Phoenixin-20 induced granulosa cell proliferation during follicular growth. The protein is Probable G-protein coupled receptor 173 (Gpr173) of Mus musculus (Mouse).